Consider the following 618-residue polypeptide: MRSRILAIVFAARHVAALPLAAEDAAATLSLTSSASSTTVLPSPTQYTLPNNDPNQGARNASIARKRELFLYGPSTLGQTTFYPTGELGNNISARDVLLWRQDAANQTATAYREANETFADITSRGGFKTLDDFALLYNGHWKESVPEGISKGMLSNCTSDLLFSMERLSSNPYVLKRLHPTKDKLPFSVESKVVKKLTATTLEALHKGGRLFLVDHSYQKKYTPQPGRYAAACQGLFYLDARSNQFLPLAIKTNVGVDLTYTPLDDKDDWLLAKIMFNNNDLFYSQMYHVLFHTIPEIVHEAAFRTLSDRHPVMGVLNRLMYQAYAIRPVGGAVLFNPGGFWDQNFGLPASAAIDFPGSVYAQGGGGFQAGYLEKDLRSRGLIGEDSGPRLPHFPFYEDAHRLIGAIRRFMQAFVDSTYGADDGDDGALLRDYELQNWIAEANGPAQVRDFPAAPLRRRAQLVDVLTHVAWITGGAHHVMNQGSPVKFSGVLPLHPAALYAPIPTAKGATGNGTRAGLLAWLPNERQAVEQVSLLARFNRAQVGDRKQTVRDAFAAPDLLAGNGPGYAAANARFVEDTGRISREIAGRGFDGKGLSQGMPFVWTALNPAVNPFFLSV.

The first 16 residues, 1–16 (MRSRILAIVFAARHVA), serve as a signal peptide directing secretion. Residues 36 to 45 (SSTTVLPSPT) are compositionally biased toward low complexity. The segment at 36 to 58 (SSTTVLPSPTQYTLPNNDPNQGA) is disordered. Residues 46 to 58 (QYTLPNNDPNQGA) are compositionally biased toward polar residues. Residues 47 to 618 (YTLPNNDPNQ…PAVNPFFLSV (572 aa)) form the Lipoxygenase domain. 5 N-linked (GlcNAc...) asparagine glycosylation sites follow: Asn60, Asn91, Asn106, Asn116, and Asn157. Mn(2+) is bound by residues His290, His294, His478, and Asn482. A glycan (N-linked (GlcNAc...) asparagine) is linked at Asn513. Val618 provides a ligand contact to Mn(2+).

Belongs to the lipoxygenase family. Manganese lipoxygenase subfamily. Mn(2+) is required as a cofactor. N- and O-glycosylated.

Its subcellular location is the secreted. It catalyses the reaction (9Z,12Z)-octadecadienoate + O2 = (11S)-hydroperoxy-(9Z,12Z)-octadecadienoate. It carries out the reaction (9Z,12Z)-octadecadienoate + O2 = (13R)-hydroperoxy-(9Z,11E)-octadecadienoate. The catalysed reaction is (9Z,12Z,15Z)-octadecatrienoate + O2 = (11S)-hydroperoxy-(9Z,12Z,15Z)-octadecatrienoate. The enzyme catalyses (9Z,12Z,15Z)-octadecatrienoate + O2 = (13R)-hydroperoxy-(9Z,11E,15Z)-octadecatrienoate. Functionally, lipoxygenase that metabolizes linoleic and alpha-linolenic acids to 11S- and 13R-hydroperoxy fatty acids. At the end of lipoxygenation, the intermediate product 11S-HPODE from linoleic acid is then transformed into 13R-HPODE as the final product. It also acts on alpha-linolenic acid producing 11S-HPOTrE and 13R-HPOTrE with subsequent transformation of 11S-HPOTrE to 13R-HPOTrE as final product. The polypeptide is Manganese lipoxygenase (Gaeumannomyces avenae (Oat take-all root rot fungus)).